Reading from the N-terminus, the 255-residue chain is Ribosomal RNA small subunit methyltransferase G 2 (255 aa).

Positions 90, 95, and 155 each coordinate S-adenosyl-L-methionine. Residues 233–245 (EDEGEELLMDELS) show a composition bias toward acidic residues. Positions 233-255 (EDEGEELLMDELSNEEKRRWAKY) are disordered. Over residues 246–255 (NEEKRRWAKY) the composition is skewed to basic and acidic residues.

The protein belongs to the methyltransferase superfamily. RNA methyltransferase RsmG family.

The protein localises to the cytoplasm. It catalyses the reaction guanosine(527) in 16S rRNA + S-adenosyl-L-methionine = N(7)-methylguanosine(527) in 16S rRNA + S-adenosyl-L-homocysteine. Its function is as follows. Specifically methylates the N7 position of guanine in position 527 of 16S rRNA. This Bdellovibrio bacteriovorus (strain ATCC 15356 / DSM 50701 / NCIMB 9529 / HD100) protein is Ribosomal RNA small subunit methyltransferase G 2.